A 701-amino-acid polypeptide reads, in one-letter code: MSAKDPKVVADLKYTRNIGIMAHIDAGKTTTTERILYYTGKSHKIGEVHDGDATMDWMVQEQERGITITSAATMAFWKDHRINIIDTPGHVDFTIEVERSLRVLDGAIAVFDGVNGVEPQSETVWKQADKYKVPRICFVNKMDRVGADFVMSFGTIKEKLNANPIPVQVPIGMEDTFRGVVDLLENKAYMWDQSGMGDHFEITDVPNDMKEEVNRFRTEVIEKIVEFEDELLEKYLNGEEVTVPELKRALRKGTLELKAFPVFCGAAFKNKGVQPLLDGVIDYLPSPLEVPAIVGHDPERPDKEIICKTEFDAHAAALAFKIANDPFAGTLTYIRVYSGEVKVGEQLLNPRTQKKERIQKLVKMHANSREEINSLKAGDIGAVIGLKFTGTGDTLCESSHAVVLETITFPEPVISVAVEAKSSADQEKMLAGLAKLEKEDPSCRLRTDPETGQILLSGMGELHLEILVDRLLREHKIQANVGKPQVSYRETITVAAKAEHVYEREIAGETHFAKVSLSIEPISQADGIQFISKVAVSKEFTAPMLKAAESGFREAAEVGPLASCSMLGIKGTLNSVEVRPDSSSEMAFKAAASLAFRDAVKAASVELLEPIFKLEVTCPDDFVGNIVGDLNARRGKILAMNVKQGGGQVISAEAPLASLFGYATDVRSLSQGRASFSMEFLEYAIVPAKVKTDILHKMGRY.

Residues 13–288 (KYTRNIGIMA…GVIDYLPSPL (276 aa)) enclose the tr-type G domain. GTP-binding positions include 22–29 (AHIDAGKT), 86–90 (DTPGH), and 140–143 (NKMD).

It belongs to the TRAFAC class translation factor GTPase superfamily. Classic translation factor GTPase family. EF-G/EF-2 subfamily.

It is found in the cytoplasm. Functionally, catalyzes the GTP-dependent ribosomal translocation step during translation elongation. During this step, the ribosome changes from the pre-translocational (PRE) to the post-translocational (POST) state as the newly formed A-site-bound peptidyl-tRNA and P-site-bound deacylated tRNA move to the P and E sites, respectively. Catalyzes the coordinated movement of the two tRNA molecules, the mRNA and conformational changes in the ribosome. The chain is Elongation factor G 1 from Bdellovibrio bacteriovorus (strain ATCC 15356 / DSM 50701 / NCIMB 9529 / HD100).